Here is a 70-residue protein sequence, read N- to C-terminus: DNA-directed RNA polymerase subunit epsilon (70 aa).

Belongs to the RNA polymerase subunit epsilon family. As to quaternary structure, RNAP is composed of a core of 2 alpha, a beta and a beta' subunit. The core is associated with a delta subunit, and at least one of epsilon or omega. When a sigma factor is associated with the core the holoenzyme is formed, which can initiate transcription.

The enzyme catalyses RNA(n) + a ribonucleoside 5'-triphosphate = RNA(n+1) + diphosphate. Functionally, a non-essential component of RNA polymerase (RNAP). The chain is DNA-directed RNA polymerase subunit epsilon from Lacticaseibacillus casei (strain BL23) (Lactobacillus casei).